We begin with the raw amino-acid sequence, 459 residues long: Bifunctional protein GlmU (459 aa).

A pyrophosphorylase region spans residues 1–229 (MTNYAIILAA…FDESLGVNDR (229 aa)). UDP-N-acetyl-alpha-D-glucosamine contacts are provided by residues 8-11 (LAAG), K22, Q72, and 77-78 (GT). Residue D102 coordinates Mg(2+). G139, E154, N169, and N227 together coordinate UDP-N-acetyl-alpha-D-glucosamine. Residue N227 participates in Mg(2+) binding. Residues 230 to 250 (VALAKAEKVMRRRINHAHMVN) form a linker region. The N-acetyltransferase stretch occupies residues 251 to 459 (GVTLTNPAST…KKKPHHPNNK (209 aa)). R332 and K350 together coordinate UDP-N-acetyl-alpha-D-glucosamine. The active-site Proton acceptor is H362. The UDP-N-acetyl-alpha-D-glucosamine site is built by Y365 and N376. Acetyl-CoA contacts are provided by residues A379, 385–386 (NY), S404, A422, and R439.

The protein in the N-terminal section; belongs to the N-acetylglucosamine-1-phosphate uridyltransferase family. This sequence in the C-terminal section; belongs to the transferase hexapeptide repeat family. As to quaternary structure, homotrimer. Mg(2+) is required as a cofactor.

The protein localises to the cytoplasm. It carries out the reaction alpha-D-glucosamine 1-phosphate + acetyl-CoA = N-acetyl-alpha-D-glucosamine 1-phosphate + CoA + H(+). The enzyme catalyses N-acetyl-alpha-D-glucosamine 1-phosphate + UTP + H(+) = UDP-N-acetyl-alpha-D-glucosamine + diphosphate. It functions in the pathway nucleotide-sugar biosynthesis; UDP-N-acetyl-alpha-D-glucosamine biosynthesis; N-acetyl-alpha-D-glucosamine 1-phosphate from alpha-D-glucosamine 6-phosphate (route II): step 2/2. The protein operates within nucleotide-sugar biosynthesis; UDP-N-acetyl-alpha-D-glucosamine biosynthesis; UDP-N-acetyl-alpha-D-glucosamine from N-acetyl-alpha-D-glucosamine 1-phosphate: step 1/1. It participates in bacterial outer membrane biogenesis; LPS lipid A biosynthesis. Catalyzes the last two sequential reactions in the de novo biosynthetic pathway for UDP-N-acetylglucosamine (UDP-GlcNAc). The C-terminal domain catalyzes the transfer of acetyl group from acetyl coenzyme A to glucosamine-1-phosphate (GlcN-1-P) to produce N-acetylglucosamine-1-phosphate (GlcNAc-1-P), which is converted into UDP-GlcNAc by the transfer of uridine 5-monophosphate (from uridine 5-triphosphate), a reaction catalyzed by the N-terminal domain. In Streptococcus mutans serotype c (strain ATCC 700610 / UA159), this protein is Bifunctional protein GlmU.